Consider the following 251-residue polypeptide: HTH-type transcriptional regulator UlaR (251 aa).

Residues 3-58 (EAQRHQILLEMLAQLGFVTVEKVVERLGISPATARRDINKLDESGKLKKVRNGAEA) form the HTH deoR-type domain. Residues 20–39 (VTVEKVVERLGISPATARRD) constitute a DNA-binding region (H-T-H motif).

It is found in the cytoplasm. Functionally, represses ulaG and the ulaABCDEF operon. This chain is HTH-type transcriptional regulator UlaR, found in Escherichia coli O127:H6 (strain E2348/69 / EPEC).